The chain runs to 123 residues: VQ motif-containing protein 29 (123 aa).

The interval threonine 24–histidine 55 is disordered. Basic residues predominate over residues serine 33 to lysine 43. The short motif at phenylalanine 66–glycine 75 is the VQ element. Over residues proline 77–alanine 94 the composition is skewed to basic and acidic residues. The disordered stretch occupies residues proline 77–tryptophan 123. The segment covering serine 97–serine 108 has biased composition (low complexity). A compositionally biased stretch (polar residues) spans tryptophan 109 to tryptophan 123.

It localises to the nucleus. Its function is as follows. May function as negative regulator of flowering transition. In Arabidopsis thaliana (Mouse-ear cress), this protein is VQ motif-containing protein 29.